We begin with the raw amino-acid sequence, 508 residues long: Photosystem II CP47 reaction center protein (508 aa).

Transmembrane regions (helical) follow at residues 21–36 (AVHI…WAGS), 101–115 (IVFS…IWHW), 140–156 (GIHL…FGAF), 203–218 (IAAG…FHLS), 237–252 (VLSS…AFIV), and 457–472 (TFAL…HGAR).

This sequence belongs to the PsbB/PsbC family. PsbB subfamily. In terms of assembly, PSII is composed of 1 copy each of membrane proteins PsbA, PsbB, PsbC, PsbD, PsbE, PsbF, PsbH, PsbI, PsbJ, PsbK, PsbL, PsbM, PsbT, PsbX, PsbY, PsbZ, Psb30/Ycf12, at least 3 peripheral proteins of the oxygen-evolving complex and a large number of cofactors. It forms dimeric complexes. Binds multiple chlorophylls. PSII binds additional chlorophylls, carotenoids and specific lipids. serves as cofactor.

The protein localises to the plastid. It localises to the chloroplast thylakoid membrane. Its function is as follows. One of the components of the core complex of photosystem II (PSII). It binds chlorophyll and helps catalyze the primary light-induced photochemical processes of PSII. PSII is a light-driven water:plastoquinone oxidoreductase, using light energy to abstract electrons from H(2)O, generating O(2) and a proton gradient subsequently used for ATP formation. The protein is Photosystem II CP47 reaction center protein of Gnetum parvifolium (Small-leaved jointfir).